A 326-amino-acid polypeptide reads, in one-letter code: tRNA uridine(34) hydroxylase (326 aa).

The Rhodanese domain occupies 123–217 (SDPEVLLIDT…YLEEVKPEES (95 aa)). Residue cysteine 177 is the Cysteine persulfide intermediate of the active site. The segment at 293 to 326 (KSRGESHIGSDVKQVIEARRQDKVERKQRQHQEG) is disordered.

This sequence belongs to the TrhO family.

It catalyses the reaction uridine(34) in tRNA + AH2 + O2 = 5-hydroxyuridine(34) in tRNA + A + H2O. In terms of biological role, catalyzes oxygen-dependent 5-hydroxyuridine (ho5U) modification at position 34 in tRNAs. This is tRNA uridine(34) hydroxylase from Shewanella loihica (strain ATCC BAA-1088 / PV-4).